A 218-amino-acid polypeptide reads, in one-letter code: Glutathione S-transferase Mu 7 (218 aa).

Residues 2–88 (PMTLGYWDIR…YLGRKHNLCG (87 aa)) enclose the GST N-terminal domain. Residues 7-8 (YW), 46-50 (WLNEK), 59-60 (NL), and 72-73 (QS) each bind glutathione. Residues 90-208 (TEEERIRVDI…KSSRFLPRPL (119 aa)) form the GST C-terminal domain. Tyrosine 116 is a substrate binding site.

Belongs to the GST superfamily. Mu family. In terms of assembly, homodimer.

The protein resides in the cytoplasm. It catalyses the reaction RX + glutathione = an S-substituted glutathione + a halide anion + H(+). Conjugation of reduced glutathione to a wide number of exogenous and endogenous hydrophobic electrophiles. The protein is Glutathione S-transferase Mu 7 of Rattus norvegicus (Rat).